A 318-amino-acid polypeptide reads, in one-letter code: NADH-ubiquinone oxidoreductase chain 1 (318 aa).

Helical transmembrane passes span 2 to 22 (PMIN…FLML), 76 to 96 (ALAL…IPLI), 100 to 120 (LGLL…LWSG), 146 to 166 (LALI…SALI), 171 to 191 (HSWL…STLA), 222 to 242 (LFFM…TMIF), 253 to 273 (ELYT…FLWI), and 294 to 314 (LPLT…TSGI).

It belongs to the complex I subunit 1 family. As to quaternary structure, core subunit of respiratory chain NADH dehydrogenase (Complex I) which is composed of 45 different subunits.

It localises to the mitochondrion inner membrane. It catalyses the reaction a ubiquinone + NADH + 5 H(+)(in) = a ubiquinol + NAD(+) + 4 H(+)(out). Core subunit of the mitochondrial membrane respiratory chain NADH dehydrogenase (Complex I) which catalyzes electron transfer from NADH through the respiratory chain, using ubiquinone as an electron acceptor. Essential for the catalytic activity and assembly of complex I. The sequence is that of NADH-ubiquinone oxidoreductase chain 1 (MT-ND1) from Pongo abelii (Sumatran orangutan).